A 500-amino-acid polypeptide reads, in one-letter code: Zinc finger protein PLAG1 (500 aa).

Residues 1-30 (MATVIPGDLSEVRDTQKVPSGKRKRGETKP) form a disordered region. Residues 2–84 (ATVIPGDLSE…SKYKLQRHMA (83 aa)) form an interaction with KPNA2 region. Positions 22 to 25 (KRKR) match the Nuclear localization signal motif. 7 C2H2-type zinc fingers span residues 34–56 (FPCQLCDKAFNSVEKLKVHSYSH), 62–86 (YKCIQQDCTKAFVSKYKLQRHMATH), 92–114 (HKCNYCEKMFHRKDHLKNHLHTH), 121–143 (FKCEECGKNYNTKLGFKRHLALH), 150–172 (LTCKVCLQTFESTGVLLEHLKSH), 185–207 (HQCEHCDRRFYTRKDVRRHMVVH), and 213–236 (FLCQYCAQRFGRKDHLTRHMKKSH). The segment at 41-242 (KAFNSVEKLK…KKSHNQELLK (202 aa)) is decreased nuclear import with localization in the nucleus but also in the cytoplasm. The segment at 243–384 (VKTEPVDFLD…QASSSSKLGL (142 aa)) is repression domain; contains 3 sumoylation motifs and massively decrease transcription activity. The tract at residues 243–500 (VKTEPVDFLD…TLPRFHQAFQ (258 aa)) is activates transcription; Inhibition of nuclear import due to lack of NLS and KPNA2 interaction. Residues K244 and K263 each participate in a glycyl lysine isopeptide (Lys-Gly) (interchain with G-Cter in SUMO) cross-link. The tract at residues 365–388 (GGVPSSSQDSQASSSSKLGLDPQI) is disordered. Residues 369–380 (SSSQDSQASSSS) show a composition bias toward low complexity. The interval 385 to 500 (DPQIGSLDDG…TLPRFHQAFQ (116 aa)) is massively activates transcription.

This sequence belongs to the krueppel C2H2-type zinc-finger protein family. Interacts with KPNA2, which escorts protein to the nucleus via interaction with nuclear localization signal. Interacts with E3 SUMO-protein ligase PIAS1, PIAS2 and PIAS4. Sumoylated with SUMO1; which inhibits transcriptional activity, but does not affect nuclear localization. Blockers of sumoylation pathway such as SENP3 and inactive UBE2I increases transcriptional capacity. Sumoylation is increased in the presence of PIAS1. In terms of processing, acetylated by lysine acetyltransferase EP300; which activates transcriptional capacity. Lysine residues that are sumoylated also seem to be target for acetylation. As to expression, expressed in fetal tissues such as lung, liver and kidney. Not detected or weak detection in normal adult tissues, but highly expressed in salivary gland with benign or malignant pleiomorphic adenomas with or without 8q12 aberrations, with preferential occurrence in benign tumors.

It localises to the nucleus. In terms of biological role, transcription factor whose activation results in up-regulation of target genes, such as IGFII, leading to uncontrolled cell proliferation: when overexpressed in cultured cells, higher proliferation rate and transformation are observed. Other target genes such as CRLF1, CRABP2, CRIP2, PIGF are strongly induced in cells with PLAG1 induction. Proto-oncogene whose ectopic expression can trigger the development of pleomorphic adenomas of the salivary gland and lipoblastomas. Overexpression is associated with up-regulation of IGFII, is frequently observed in hepatoblastoma, common primary liver tumor in childhood. Cooperates with CBFB-MYH11, a fusion gene important for myeloid leukemia. The sequence is that of Zinc finger protein PLAG1 (PLAG1) from Homo sapiens (Human).